We begin with the raw amino-acid sequence, 146 residues long: MSTTTEILAHHWAFALFLIIAIGLCVFMLTGGFLLGGRAKGRAKNVPYESGIDSVGSARLRLSAKFYLVAMFFVIFDVEALYLYAWAVSIKESGWIGFIEATIFILVLLAGLIYLVRVGALDWTPVRSKRQVVKSDIINTTNTHPQ.

3 helical membrane-spanning segments follow: residues 14 to 34 (FALF…GGFL), 68 to 88 (LVAM…AWAV), and 96 to 116 (IGFI…IYLV).

The protein belongs to the complex I subunit 3 family. NDH-1 is composed of 13 different subunits. Subunits NuoA, H, J, K, L, M, N constitute the membrane sector of the complex.

The protein localises to the cell inner membrane. It catalyses the reaction a quinone + NADH + 5 H(+)(in) = a quinol + NAD(+) + 4 H(+)(out). Its function is as follows. NDH-1 shuttles electrons from NADH, via FMN and iron-sulfur (Fe-S) centers, to quinones in the respiratory chain. The immediate electron acceptor for the enzyme in this species is believed to be ubiquinone. Couples the redox reaction to proton translocation (for every two electrons transferred, four hydrogen ions are translocated across the cytoplasmic membrane), and thus conserves the redox energy in a proton gradient. The chain is NADH-quinone oxidoreductase subunit A from Pectobacterium atrosepticum (strain SCRI 1043 / ATCC BAA-672) (Erwinia carotovora subsp. atroseptica).